Reading from the N-terminus, the 379-residue chain is S-adenosylmethionine synthase (379 aa).

An ATP-binding site is contributed by H15. D17 is a binding site for Mg(2+). E43 is a binding site for K(+). The L-methionine site is built by E56 and Q99. The flexible loop stretch occupies residues 99–109; it reads QSPDITQGVDR. Residues 164 to 166, 230 to 231, D239, 245 to 246, A262, and K266 each bind ATP; these read DAK, RF, and RK. D239 is a binding site for L-methionine. Residue K270 coordinates L-methionine.

It belongs to the AdoMet synthase family. As to quaternary structure, homotetramer; dimer of dimers. Requires Mg(2+) as cofactor. K(+) serves as cofactor.

Its subcellular location is the cytoplasm. The catalysed reaction is L-methionine + ATP + H2O = S-adenosyl-L-methionine + phosphate + diphosphate. It participates in amino-acid biosynthesis; S-adenosyl-L-methionine biosynthesis; S-adenosyl-L-methionine from L-methionine: step 1/1. Catalyzes the formation of S-adenosylmethionine (AdoMet) from methionine and ATP. The overall synthetic reaction is composed of two sequential steps, AdoMet formation and the subsequent tripolyphosphate hydrolysis which occurs prior to release of AdoMet from the enzyme. The chain is S-adenosylmethionine synthase from Buchnera aphidicola subsp. Schizaphis graminum (strain Sg).